Consider the following 1912-residue polypeptide: Protein javelin (1912 aa).

Disordered stretches follow at residues 1 to 32 (MGNG…QHNY), 89 to 145 (GTGL…VGGA), 298 to 377 (RSRH…HRLS), 460 to 515 (QSRR…SLSE), 545 to 586 (TTRT…TLRQ), 764 to 920 (SYNQ…EAPV), 965 to 1010 (IQEN…GKPL), 1257 to 1297 (GINS…GGAA), 1486 to 1507 (EQQE…QYED), and 1881 to 1912 (YDPS…DDKM). Composition is skewed to basic residues over residues 97–133 (QQLH…HPHA) and 299–313 (SRHK…KKPP). The span at 339–354 (ADDTQSQRSNSATCDS) shows a compositional bias: polar residues. The span at 355 to 374 (HQQQQQQQHQPQQQHQQQQH) shows a compositional bias: low complexity. Over residues 489–498 (EHSQSSVFPE) the composition is skewed to polar residues. Low complexity predominate over residues 499 to 512 (TTTSNSDDQTDSPS). The segment covering 553–566 (SEEGEEEQTGEEVV) has biased composition (acidic residues). A compositionally biased stretch (polar residues) spans 568–586 (SLTTPTEPQTSDSESTLRQ). 2 stretches are compositionally biased toward basic and acidic residues: residues 772-792 (QRKE…DSIR) and 802-869 (RQRE…RKEE). The span at 890 to 904 (SQQEDTVADVEEEDN) shows a compositional bias: acidic residues. Positions 965 to 979 (IQENKETSQRIEPKP) are enriched in basic and acidic residues. Residues 981-990 (PKTNSNSSST) show a composition bias toward low complexity. Acidic residues-rich tracts occupy residues 1494–1507 (LEEE…QYED) and 1903–1912 (ELYDSLDDKM).

The protein localises to the cytoplasm. It localises to the cytoskeleton. Its function is as follows. Important for normal assembly of actin bundles during bristle formation. This chain is Protein javelin, found in Drosophila melanogaster (Fruit fly).